The following is a 192-amino-acid chain: MRIVLLGPPGAGKGTQAKMLCEEYHIPQLSTGDMLREVIRRETEIGKKAKAMINAGTLVSDSIVNQIVSDRIDESDCINGFVLDGYPRTVGQAEVLQQVLQSKNMQLDAVIELIVDEDALLERMKKRVQETIIAGGQVRSDDNPVAFAKRLVEYREKTAPLSEFYLQRRLLKLVDGMIGVTEVSRKIREVLK.

10–15 (GAGKGT) contacts ATP. Residues 30–59 (STGDMLREVIRRETEIGKKAKAMINAGTLV) form an NMP region. Residues T31, R36, 57–59 (TLV), 85–88 (GYPR), and Q92 contribute to the AMP site. The LID stretch occupies residues 126-142 (KRVQETIIAGGQVRSDD). Position 127 (R127) interacts with ATP. Residues R139 and R150 each contribute to the AMP site. Position 178 (I178) interacts with ATP.

Belongs to the adenylate kinase family. In terms of assembly, monomer.

The protein localises to the cytoplasm. It carries out the reaction AMP + ATP = 2 ADP. The protein operates within purine metabolism; AMP biosynthesis via salvage pathway; AMP from ADP: step 1/1. In terms of biological role, catalyzes the reversible transfer of the terminal phosphate group between ATP and AMP. Plays an important role in cellular energy homeostasis and in adenine nucleotide metabolism. This is Adenylate kinase from Bartonella henselae (strain ATCC 49882 / DSM 28221 / CCUG 30454 / Houston 1) (Rochalimaea henselae).